The chain runs to 320 residues: MDSEASDIEAELSDSVSAGGEEYIDDDDYTEDIDDQIVTAKSSRRTARRSVPKGVRTSKRIRDKELSVEVDEDYDEEEDVLSPSKKRHLHTRSMDKRQVAATASEKSDIGDSKGNDGEIEDGILEEEESLEKELNRGGGKEVEKSEESYYAQNDVGQKGEEEQDGESGGYEDNEPSISKESDELVSVVNGNGNEEDDEVEATKENTTDSTRSTTTRSKMLLDLLEDGGSKKKLTDEEIQLRRAENARKRKNLSEKRLEEEKQDTINKLLKKRAGKSRSHLPNDDEKNDGSSSFVKPRRPYNSEGMTRILRRYEEDLFCTF.

2 stretches are compositionally biased toward acidic residues: residues 1 to 12 and 22 to 35; these read MDSEASDIEAEL and EYID…DIDD. 2 disordered regions span residues 1–232 and 244–306; these read MDSE…SKKK and ENAR…EGMT. Basic residues predominate over residues 42–59; sequence SSRRTARRSVPKGVRTSK. At Ser-67 the chain carries Phosphoserine. The span at 68–80 shows a compositional bias: acidic residues; the sequence is VEVDEDYDEEEDV. Basic and acidic residues predominate over residues 105-116; that stretch reads EKSDIGDSKGND. Over residues 117-130 the composition is skewed to acidic residues; that stretch reads GEIEDGILEEEESL. Phosphoserine is present on Ser-129. The segment covering 131-147 has biased composition (basic and acidic residues); that stretch reads EKELNRGGGKEVEKSEE. Acidic residues predominate over residues 161–174; the sequence is EEQDGESGGYEDNE. Over residues 207–217 the composition is skewed to low complexity; the sequence is TDSTRSTTTRS. Over residues 244 to 264 the composition is skewed to basic and acidic residues; sequence ENARKRKNLSEKRLEEEKQDT. Basic residues predominate over residues 268-278; the sequence is LLKKRAGKSRS.

Belongs to the IES2 family. In terms of assembly, component of the chromatin-remodeling INO80 complex, at least composed of ARP4, ARP5, ARP8, RVB1, RVB2, TAF14, NHP10, IES1, IES3, IES4, IES6, ACT1, IES2, IES5 and INO80.

Its subcellular location is the nucleus. In terms of biological role, component of the INO80 complex which remodels chromatin by shifting nucleosomes and is involved in DNA repair. The chain is Ino eighty subunit 2 (IES2) from Saccharomyces cerevisiae (strain ATCC 204508 / S288c) (Baker's yeast).